The following is a 208-amino-acid chain: ATP-dependent Clp protease proteolytic subunit (208 aa).

The Nucleophile role is filled by S112. The active site involves H137.

The protein belongs to the peptidase S14 family. Fourteen ClpP subunits assemble into 2 heptameric rings which stack back to back to give a disk-like structure with a central cavity, resembling the structure of eukaryotic proteasomes.

Its subcellular location is the cytoplasm. It carries out the reaction Hydrolysis of proteins to small peptides in the presence of ATP and magnesium. alpha-casein is the usual test substrate. In the absence of ATP, only oligopeptides shorter than five residues are hydrolyzed (such as succinyl-Leu-Tyr-|-NHMec, and Leu-Tyr-Leu-|-Tyr-Trp, in which cleavage of the -Tyr-|-Leu- and -Tyr-|-Trp bonds also occurs).. Its function is as follows. Cleaves peptides in various proteins in a process that requires ATP hydrolysis. Has a chymotrypsin-like activity. Plays a major role in the degradation of misfolded proteins. This Buchnera aphidicola subsp. Acyrthosiphon pisum (strain APS) (Acyrthosiphon pisum symbiotic bacterium) protein is ATP-dependent Clp protease proteolytic subunit.